Here is a 316-residue protein sequence, read N- to C-terminus: Olfactory receptor 56B2 (316 aa).

The Extracellular segment spans residues 1-32 (MVLQELRDSNSSKFQVSEFILMGFPGIHSWQH). N-linked (GlcNAc...) asparagine glycosylation is present at Asn10. Residues 33 to 53 (WLSLPLALLYLLALSANILIL) traverse the membrane as a helical segment. Residues 54-61 (IIINKEAA) are Cytoplasmic-facing. A helical membrane pass occupies residues 62 to 82 (LHQPMYYFLGILAMADIGLAT). Over 83–106 (TIMPKILAILWFNAKTISLLECFA) the chain is Extracellular. Cys104 and Cys196 are oxidised to a cystine. The helical transmembrane segment at 107-127 (QMYAIHCFVAMESSTFVCMAI) threads the bilayer. Residues 128 to 146 (DRYVAICRPLRYPSIITES) lie on the Cytoplasmic side of the membrane. A helical transmembrane segment spans residues 147–167 (FVFKANGFMALRNSLCLISVP). The Extracellular portion of the chain corresponds to 168-203 (LLAAQRHYCSQNQIEHCLCSNLGVTSLSCDDRRINS). The helical transmembrane segment at 204-224 (INQVLLAWTLMGSDLGLIILS) threads the bilayer. The Cytoplasmic segment spans residues 225–244 (YALILYSVLKLNSPEAASKA). The chain crosses the membrane as a helical span at residues 245 to 265 (LSTCTSHLILILFFYTVIIVI). Topologically, residues 266–279 (SITRSTGMRVPLIP) are extracellular. Residues 280 to 300 (VLLNVLHNVIPPALNPMVYAL) traverse the membrane as a helical segment. The Cytoplasmic portion of the chain corresponds to 301-316 (KNKELRQGLYKVLRLE).

This sequence belongs to the G-protein coupled receptor 1 family.

It localises to the cell membrane. In terms of biological role, odorant receptor. In Homo sapiens (Human), this protein is Olfactory receptor 56B2.